Consider the following 287-residue polypeptide: ATP synthase gamma chain (287 aa).

It belongs to the ATPase gamma chain family. F-type ATPases have 2 components, CF(1) - the catalytic core - and CF(0) - the membrane proton channel. CF(1) has five subunits: alpha(3), beta(3), gamma(1), delta(1), epsilon(1). CF(0) has three main subunits: a, b and c.

It localises to the cell membrane. In terms of biological role, produces ATP from ADP in the presence of a proton gradient across the membrane. The gamma chain is believed to be important in regulating ATPase activity and the flow of protons through the CF(0) complex. In Wolbachia sp. subsp. Drosophila simulans (strain wRi), this protein is ATP synthase gamma chain.